Reading from the N-terminus, the 238-residue chain is Flagellar L-ring protein (238 aa).

The N-terminal stretch at 1 to 17 is a signal peptide; it reads MKRRLLAAGCAMLLLSG. A lipid anchor (N-palmitoyl cysteine) is attached at cysteine 18. Cysteine 18 carries S-diacylglycerol cysteine lipidation. The segment at 22–50 is disordered; sequence RQQPSPVPPVTQPQAYAEPEDTAANPGSL.

It belongs to the FlgH family. In terms of assembly, the basal body constitutes a major portion of the flagellar organelle and consists of four rings (L,P,S, and M) mounted on a central rod.

The protein localises to the cell outer membrane. Its subcellular location is the bacterial flagellum basal body. Functionally, assembles around the rod to form the L-ring and probably protects the motor/basal body from shearing forces during rotation. The sequence is that of Flagellar L-ring protein from Nitratidesulfovibrio vulgaris (strain DSM 19637 / Miyazaki F) (Desulfovibrio vulgaris).